The chain runs to 247 residues: Mast cell protease 2 (247 aa).

An N-terminal signal peptide occupies residues 1–18 (MQALLFLMALLLPSGAGA). The propeptide at 19 to 20 (EE) is activation peptide. A Peptidase S1 domain is found at 21 to 244 (IIGGVESIPH…YVPWINAVIN (224 aa)). A disulfide bond links C50 and C66. Active-site charge relay system residues include H65 and D109. 2 cysteine pairs are disulfide-bonded: C143–C208 and C174–C187. The Charge relay system role is filled by S202.

Belongs to the peptidase S1 family. Granzyme subfamily.

This enzyme, isolated from small intestine, specifically inactivates the apo forms of a certain group of intracellular pyridoxal phosphate-requiring enzymes. It has chymotrypsin-like specificity towards small substrates. This is Mast cell protease 2 (Mcpt2) from Rattus norvegicus (Rat).